The chain runs to 84 residues: Kunitz-type neurotoxin MitTx-alpha (84 aa).

Positions Met-1 to Ser-24 are cleaved as a signal peptide. Position 25 is a pyrrolidone carboxylic acid (Gln-25). The BPTI/Kunitz inhibitor domain maps to Cys-31–Cys-82. Intrachain disulfides connect Cys-31–Cys-82, Cys-41–Cys-65, and Cys-57–Cys-78.

This sequence belongs to the venom Kunitz-type family. Heterodimer of an alpha (Kunitz-type) and a beta (phospholipase A2 homolog) chains; non-covalently-linked. Expressed by the venom gland.

Its subcellular location is the secreted. MitTx, a heteromeric complex between Kunitz- and phospholipase-A2-like proteins, potently, persistently and selectively activates rat and chicken acid-sensing ion channel ASIC1. Both alternatively spliced rat isoforms ASIC1a and ASIC1b are activated, with a higher potency for ASIC1a (EC(50)=9.4 nM) vs ASIC1b (EC(50)=23 nM). The rat ASIC3 subtype is also sensitive to the heterodimer, but with a lower potency (EC(50)=830 nM). On rat ASIC2a, the toxin shows a very weak activation, but produces a remarkable potentiation (&gt;100-fold) of protons when the extracellular pH drops below neutrality. Moderate and weak activations are also observed on the heterotrimers Asic1a-Asic2a and Asic1a-Asic3 (expressed in CHO cells), respectively. The binding sites of the beta subunit of MitTx and the spider psalmotoxin-1 overlap, explaining why these toxins are mutually exclusive. In vivo, the heterodimer elicits robust pain-related behavior in mice by activation of ASIC1 channels on capsaicin-sensitive nerve fibers. This Micrurus tener tener (Texas coral snake) protein is Kunitz-type neurotoxin MitTx-alpha.